The primary structure comprises 213 residues: Small ribosomal subunit protein uS3c (213 aa).

Residues 39 to 109 (IRKYLNAKLA…KFRITITYLQ (71 aa)) form the KH type-2 domain.

The protein belongs to the universal ribosomal protein uS3 family. As to quaternary structure, part of the 30S ribosomal subunit.

It localises to the plastid. Its subcellular location is the chloroplast. This is Small ribosomal subunit protein uS3c (rps3) from Mesostigma viride (Green alga).